The sequence spans 263 residues: tRNA (guanine-N(7)-)-methyltransferase (263 aa).

The disordered stretch occupies residues 1-39; that stretch reads MVHHGQMHAQPGVGLRPDTPVASGQLPSTSIRSRRSGIS. 4 residues coordinate S-adenosyl-L-methionine: Glu82, Asp107, Asn136, and Asp159. Asp159 is a catalytic residue. Substrate contacts are provided by residues Lys163, Asp195, and 232–235; that span reads TKYE.

Belongs to the class I-like SAM-binding methyltransferase superfamily. TrmB family.

The catalysed reaction is guanosine(46) in tRNA + S-adenosyl-L-methionine = N(7)-methylguanosine(46) in tRNA + S-adenosyl-L-homocysteine. Its pathway is tRNA modification; N(7)-methylguanine-tRNA biosynthesis. In terms of biological role, catalyzes the formation of N(7)-methylguanine at position 46 (m7G46) in tRNA. This is tRNA (guanine-N(7)-)-methyltransferase from Mycobacterium bovis (strain ATCC BAA-935 / AF2122/97).